We begin with the raw amino-acid sequence, 306 residues long: Acetylglutamate kinase (306 aa).

Residues 68-69 (GG), arginine 90, and asparagine 195 contribute to the substrate site.

This sequence belongs to the acetylglutamate kinase family. ArgB subfamily.

The protein resides in the cytoplasm. It catalyses the reaction N-acetyl-L-glutamate + ATP = N-acetyl-L-glutamyl 5-phosphate + ADP. Its pathway is amino-acid biosynthesis; L-arginine biosynthesis; N(2)-acetyl-L-ornithine from L-glutamate: step 2/4. Its function is as follows. Catalyzes the ATP-dependent phosphorylation of N-acetyl-L-glutamate. In Chromohalobacter salexigens (strain ATCC BAA-138 / DSM 3043 / CIP 106854 / NCIMB 13768 / 1H11), this protein is Acetylglutamate kinase.